The sequence spans 259 residues: Type III pantothenate kinase (259 aa).

6-13 (DAGNTNIV) contributes to the ATP binding site. Residues Y100 and 107 to 110 (GADR) contribute to the substrate site. D109 functions as the Proton acceptor in the catalytic mechanism. Position 129 (D129) interacts with K(+). T132 contacts ATP. Position 184 (T184) interacts with substrate.

This sequence belongs to the type III pantothenate kinase family. In terms of assembly, homodimer. It depends on NH4(+) as a cofactor. The cofactor is K(+).

It localises to the cytoplasm. It catalyses the reaction (R)-pantothenate + ATP = (R)-4'-phosphopantothenate + ADP + H(+). Its pathway is cofactor biosynthesis; coenzyme A biosynthesis; CoA from (R)-pantothenate: step 1/5. Catalyzes the phosphorylation of pantothenate (Pan), the first step in CoA biosynthesis. This is Type III pantothenate kinase from Clostridium novyi (strain NT).